The chain runs to 370 residues: Formate dehydrogenase (370 aa).

The substrate site is built by Ile94 and Asn120. Residues 175-176, Asp196, 231-235, Thr257, Asp283, and 312-315 each bind NAD(+); these read RI, PLHES, and HMSG.

The protein belongs to the D-isomer specific 2-hydroxyacid dehydrogenase family. FDH subfamily. In terms of assembly, homodimer.

The protein resides in the cytoplasm. The catalysed reaction is formate + NAD(+) = CO2 + NADH. In terms of biological role, catalyzes the NAD(+)-dependent oxidation of formate to carbon dioxide. Formate oxidation is the final step in the methanol oxidation pathway in methylotrophic microorganisms. Has a role in the detoxification of exogenous formate in non-methylotrophic organisms. This chain is Formate dehydrogenase, found in Chaetomium thermophilum (strain DSM 1495 / CBS 144.50 / IMI 039719) (Thermochaetoides thermophila).